Consider the following 117-residue polypeptide: Large ribosomal subunit protein bL20 (117 aa).

The protein belongs to the bacterial ribosomal protein bL20 family.

Binds directly to 23S ribosomal RNA and is necessary for the in vitro assembly process of the 50S ribosomal subunit. It is not involved in the protein synthesizing functions of that subunit. This is Large ribosomal subunit protein bL20 from Mesomycoplasma hyopneumoniae (strain J / ATCC 25934 / NCTC 10110) (Mycoplasma hyopneumoniae).